Here is a 201-residue protein sequence, read N- to C-terminus: MSGGGDVNMSGGDRRKGTVKWFDTQKGFGFITPSDGGDDLFVHQSSIRSEGFRSLAAEESVEFDVEVDNSGRPKAIEVSGPDGAPVQGNSGGGGSSGGRGGFGGGGGRGGGRGGGSYGGGYGGRGSGGRGGGGGDNSCFKCGEPGHMARECSQGGGGYSGGGGGGRYGSGGGGGGGGGGLSCYSCGESGHFARDCTSGGAR.

S2 carries the N-acetylserine modification. The region spanning 14 to 81 (RRKGTVKWFD…RPKAIEVSGP (68 aa)) is the CSD domain. Residues 66–109 (EVDNSGRPKAIEVSGPDGAPVQGNSGGGGSSGGRGGFGGGGGRG) form a disordered region. Residues 89–109 (NSGGGGSSGGRGGFGGGGGRG) are compositionally biased toward gly residues. 2 CCHC-type zinc fingers span residues 136 to 153 (NSCF…ECSQ) and 180 to 197 (LSCY…DCTS).

Belongs to the cold shock protein (CSP) family. In terms of tissue distribution, mostly expressed in shoot apices and siliques, and, to a lower extent, in roots, cotyledons, stems, shoots, leaves, floral buds and flowers. Present in shoot apical meristems and siliques (at protein level). Very low levels are observed in cv. Landsberg erecta compared to cv. Columbia.

The protein resides in the cytoplasm. Its subcellular location is the nucleus. It localises to the nucleolus. In terms of biological role, chaperone that binds to and unwinds RNA and both single-stranded DNA and double-stranded DNA (ssDNA and dsDNA DNA). Regulates the flowering transition and flower and seed development, particularly at late stages of embryo development, through regulation of gene expression (including MEA, FIS2, AP1, CAL, AG and SHP2). In Arabidopsis thaliana (Mouse-ear cress), this protein is Cold shock domain-containing protein 4 (CSP4).